We begin with the raw amino-acid sequence, 265 residues long: Membrane steroid-binding protein 2 (265 aa).

Residues 63–85 form a helical membrane-spanning segment; sequence WAAARSASPVAVIAAVAGAAVVY. Positions 94-116 are disordered; it reads PPPPPARPREEPSEEAPPPPEPV. Positions 118-217 constitute a Cytochrome b5 heme-binding domain; sequence VGEITAEELL…SKYVKVGTIK (100 aa). The tract at residues 120–217 is steroid-binding; it reads EITAEELLQY…SKYVKVGTIK (98 aa).

The protein belongs to the cytochrome b5 family. MAPR subfamily.

It is found in the cell membrane. Its function is as follows. Binds multiple steroid compounds. The polypeptide is Membrane steroid-binding protein 2 (Oryza sativa subsp. japonica (Rice)).